We begin with the raw amino-acid sequence, 254 residues long: tRNA pseudouridine synthase A (254 aa).

The active-site Nucleophile is the aspartate 52. Substrate is bound at residue tyrosine 111.

It belongs to the tRNA pseudouridine synthase TruA family. In terms of assembly, homodimer.

It carries out the reaction uridine(38/39/40) in tRNA = pseudouridine(38/39/40) in tRNA. Its function is as follows. Formation of pseudouridine at positions 38, 39 and 40 in the anticodon stem and loop of transfer RNAs. In Methylobacterium nodulans (strain LMG 21967 / CNCM I-2342 / ORS 2060), this protein is tRNA pseudouridine synthase A.